A 415-amino-acid polypeptide reads, in one-letter code: Multifunctional CCA protein (415 aa).

ATP contacts are provided by Gly8 and Arg11. Gly8 and Arg11 together coordinate CTP. Mg(2+)-binding residues include Glu21 and Asp23. ATP contacts are provided by Arg91, Arg137, and Arg140. CTP-binding residues include Arg91, Arg137, and Arg140. The HD domain occupies Thr226 to Trp327.

This sequence belongs to the tRNA nucleotidyltransferase/poly(A) polymerase family. Bacterial CCA-adding enzyme type 1 subfamily. In terms of assembly, monomer. Can also form homodimers and oligomers. Requires Mg(2+) as cofactor. The cofactor is Ni(2+).

The catalysed reaction is a tRNA precursor + 2 CTP + ATP = a tRNA with a 3' CCA end + 3 diphosphate. It carries out the reaction a tRNA with a 3' CCA end + 2 CTP + ATP = a tRNA with a 3' CCACCA end + 3 diphosphate. Catalyzes the addition and repair of the essential 3'-terminal CCA sequence in tRNAs without using a nucleic acid template. Adds these three nucleotides in the order of C, C, and A to the tRNA nucleotide-73, using CTP and ATP as substrates and producing inorganic pyrophosphate. tRNA 3'-terminal CCA addition is required both for tRNA processing and repair. Also involved in tRNA surveillance by mediating tandem CCA addition to generate a CCACCA at the 3' terminus of unstable tRNAs. While stable tRNAs receive only 3'-terminal CCA, unstable tRNAs are marked with CCACCA and rapidly degraded. This chain is Multifunctional CCA protein, found in Sodalis glossinidius (strain morsitans).